Consider the following 351-residue polypeptide: MAFRIASSPFTHNQQRTQRIMLWVILACLPGMLAQVYFFGYGNLIQVGLASATALIAEGVTLSLRKFAVRTTLADNSALLTAVLLGISLPPLAPWWMVVMATVFAIIIAKQLYGGLGQNPFNPAMIGYVVLLISFPVQMTSWLPPEPLQTISLSFHDSLVIIFTGHTPDGHTMQQLMHNVDGVSQATPLDTFKTSLRSGQTPQNILQQPMFAQSLSGIGWQWVNIGFLIGGLFLLMRGTIRWHIPVSFLLSLMFCALLSWIIAPDKFAQPMLHLLSGATMLGAFFIATDPVTASTTNRGRLIFGALIGLLVWLIRTYGGYPDGVAFAVLLANITVPLIDYYTKPRAYGHHR.

The next 4 helical transmembrane spans lie at 20–40, 44–64, 89–109, and 123–143; these read IMLW…YFFG, LIQV…TLSL, LPPL…IIIA, and PAMI…TSWL. Thr-187 is subject to FMN phosphoryl threonine. Transmembrane regions (helical) follow at residues 215 to 235, 244 to 264, 267 to 287, 301 to 321, and 322 to 342; these read LSGI…LFLL, IPVS…IIAP, FAQP…FFIA, LIFG…GGYP, and DGVA…DYYT.

It belongs to the NqrB/RnfD family. In terms of assembly, the complex is composed of six subunits: RnfA, RnfB, RnfC, RnfD, RnfE and RnfG. FMN serves as cofactor.

It localises to the cell inner membrane. Part of a membrane-bound complex that couples electron transfer with translocation of ions across the membrane. The protein is Ion-translocating oxidoreductase complex subunit D of Pectobacterium atrosepticum (strain SCRI 1043 / ATCC BAA-672) (Erwinia carotovora subsp. atroseptica).